An 85-amino-acid chain; its full sequence is MCVSRLVLLFGLLLCVGAQLSNAQHWSHGWYPGGKRELDSFGTSEISEEIKLCEAGECSYLRPQRRSVLRNIILDALARELQKRK.

The first 23 residues, 1-23, serve as a signal peptide directing secretion; that stretch reads MCVSRLVLLFGLLLCVGAQLSNA. Residue Gln24 is modified to Pyrrolidone carboxylic acid. Gly33 is subject to Glycine amide.

This sequence belongs to the GnRH family.

The protein resides in the secreted. Its function is as follows. Stimulates the secretion of gonadotropins. This chain is Progonadoliberin-2 (gnrh2), found in Dicentrarchus labrax (European seabass).